We begin with the raw amino-acid sequence, 176 residues long: Ribosome maturation factor RimM (176 aa).

One can recognise a PRC barrel domain in the interval 99 to 174 (KNEFYITDLI…IVLIQPEIWN (76 aa)).

This sequence belongs to the RimM family. In terms of assembly, binds ribosomal protein uS19.

The protein localises to the cytoplasm. Functionally, an accessory protein needed during the final step in the assembly of 30S ribosomal subunit, possibly for assembly of the head region. Essential for efficient processing of 16S rRNA. May be needed both before and after RbfA during the maturation of 16S rRNA. It has affinity for free ribosomal 30S subunits but not for 70S ribosomes. The protein is Ribosome maturation factor RimM of Leptospira interrogans serogroup Icterohaemorrhagiae serovar copenhageni (strain Fiocruz L1-130).